The sequence spans 1359 residues: Transcriptional regulator ATRX homolog (1359 aa).

The tract at residues 1–402 (MRVGVSESED…RAEKERRKRL (402 aa)) is disordered. Residues 11-49 (SDGHVIEDEDLEMARQIENERKEKRAQKLKEKREREGKP) show a composition bias toward basic and acidic residues. Over residues 50 to 61 (PPKKRPAKKRKA) the composition is skewed to basic residues. A compositionally biased stretch (acidic residues) spans 64–73 (SEEDDDDEEE). Basic residues-rich tracts occupy residues 77-86 (KSSKKSRKRA), 103-123 (KSKSKKKVDQKKKEKSKKKRT), 139-149 (KSKKKSKKTKK), 165-177 (VKKSKKNKEKSVK), 194-204 (KKSKKGLKKKA), and 219-229 (KKSKKKSKKVV). Residues 257–271 (ESSESEKSDEEEEEK) are compositionally biased toward acidic residues. A compositionally biased stretch (basic and acidic residues) spans 321 to 336 (KDQKSESEASDVEEKV). The segment covering 347–357 (SESGSDSSEGS) has biased composition (low complexity). The span at 362 to 376 (RKSKKKEKPEKKKKG) shows a compositional bias: basic residues. The segment covering 383-397 (KLQKETIDAERAEKE) has biased composition (basic and acidic residues). The 203-residue stretch at 483 to 685 (DRLDTEGSGG…HCMVNFVKPG (203 aa)) folds into the Helicase ATP-binding domain. 496-503 (HCMGLGKT) contacts ATP. The DEAH box signature appears at 636–639 (DEAH). Residues 809-891 (RVMREDAEEE…NSDDEDEEDG (83 aa)) are disordered. Positions 814 to 832 (DAEEEADFIDDGDGSESES) are enriched in acidic residues. Positions 833-847 (EGSFKSGSESDSGKS) are enriched in low complexity. The region spanning 951 to 1134 (LLVEIIKKCE…EAQIQRHYLG (184 aa)) is the Helicase C-terminal domain.

It belongs to the SNF2/RAD54 helicase family.

The protein resides in the nucleus. It catalyses the reaction ATP + H2O = ADP + phosphate + H(+). Its function is as follows. Required for embryonic development and gonadogenesis. Also, functions redundantly with the transcriptional repressor lin-35 to regulate somatic gonad development. The protein is Transcriptional regulator ATRX homolog of Caenorhabditis elegans.